The following is a 634-amino-acid chain: 1-deoxy-D-xylulose-5-phosphate synthase (634 aa).

Thiamine diphosphate-binding positions include H72 and 113–115; that span reads GHS. Position 144 (D144) interacts with Mg(2+). Residues 145–146, N173, Y284, and E367 contribute to the thiamine diphosphate site; that span reads GA. Residue N173 coordinates Mg(2+).

The protein belongs to the transketolase family. DXPS subfamily. In terms of assembly, homodimer. Mg(2+) serves as cofactor. The cofactor is thiamine diphosphate.

The catalysed reaction is D-glyceraldehyde 3-phosphate + pyruvate + H(+) = 1-deoxy-D-xylulose 5-phosphate + CO2. It participates in metabolic intermediate biosynthesis; 1-deoxy-D-xylulose 5-phosphate biosynthesis; 1-deoxy-D-xylulose 5-phosphate from D-glyceraldehyde 3-phosphate and pyruvate: step 1/1. Catalyzes the acyloin condensation reaction between C atoms 2 and 3 of pyruvate and glyceraldehyde 3-phosphate to yield 1-deoxy-D-xylulose-5-phosphate (DXP). The chain is 1-deoxy-D-xylulose-5-phosphate synthase from Listeria welshimeri serovar 6b (strain ATCC 35897 / DSM 20650 / CCUG 15529 / CIP 8149 / NCTC 11857 / SLCC 5334 / V8).